The primary structure comprises 565 residues: NAD-dependent malic enzyme (565 aa).

Tyrosine 104 (proton donor) is an active-site residue. Arginine 157 provides a ligand contact to NAD(+). The Proton acceptor role is filled by lysine 175. Residues glutamate 246, aspartate 247, and aspartate 270 each coordinate a divalent metal cation. NAD(+) contacts are provided by aspartate 270 and asparagine 418.

The protein belongs to the malic enzymes family. In terms of assembly, homotetramer. Mg(2+) serves as cofactor. The cofactor is Mn(2+).

The catalysed reaction is (S)-malate + NAD(+) = pyruvate + CO2 + NADH. The enzyme catalyses oxaloacetate + H(+) = pyruvate + CO2. The protein is NAD-dependent malic enzyme of Proteus mirabilis (strain HI4320).